We begin with the raw amino-acid sequence, 256 residues long: Enolase-phosphatase E1 (256 aa).

Mg(2+) contacts are provided by Asp-14 and Glu-16. Substrate-binding positions include 142–143 (SS) and Lys-176. Asp-201 is a binding site for Mg(2+).

Belongs to the HAD-like hydrolase superfamily. MasA/MtnC family. As to quaternary structure, monomer. Mg(2+) serves as cofactor.

It is found in the cytoplasm. Its subcellular location is the nucleus. The enzyme catalyses 5-methylsulfanyl-2,3-dioxopentyl phosphate + H2O = 1,2-dihydroxy-5-(methylsulfanyl)pent-1-en-3-one + phosphate. It participates in amino-acid biosynthesis; L-methionine biosynthesis via salvage pathway; L-methionine from S-methyl-5-thio-alpha-D-ribose 1-phosphate: step 3/6. It functions in the pathway amino-acid biosynthesis; L-methionine biosynthesis via salvage pathway; L-methionine from S-methyl-5-thio-alpha-D-ribose 1-phosphate: step 4/6. Its function is as follows. Bifunctional enzyme that catalyzes the enolization of 2,3-diketo-5-methylthiopentyl-1-phosphate (DK-MTP-1-P) into the intermediate 2-hydroxy-3-keto-5-methylthiopentenyl-1-phosphate (HK-MTPenyl-1-P), which is then dephosphorylated to form the acireductone 1,2-dihydroxy-3-keto-5-methylthiopentene (DHK-MTPene). The polypeptide is Enolase-phosphatase E1 (Drosophila simulans (Fruit fly)).